Reading from the N-terminus, the 205-residue chain is SREBP regulating gene protein (205 aa).

At 1 to 16 (MALYVSMVWRKILRKR) the chain is on the cytoplasmic side. Residues 17 to 35 (WVLGVVFGLSLIYFLTSTF) traverse the membrane as a helical segment. Residues 36–205 (KQEERTVRDR…GESPPELLPI (170 aa)) lie on the Lumenal side of the membrane. Asparagine 67 is a glycosylation site (N-linked (GlcNAc...) asparagine).

The protein belongs to the SPRING family.

The protein localises to the golgi apparatus membrane. Functionally, positively regulates hepatic SREBP signaling pathway by modulating the proper localization of SCAP (SREBP cleavage-activating protein) to the endoplasmic reticulum, thereby controlling the level of functional SCAP. The chain is SREBP regulating gene protein from Xenopus laevis (African clawed frog).